A 152-amino-acid polypeptide reads, in one-letter code: Ribosome maturation factor RimP (152 aa).

Belongs to the RimP family.

The protein resides in the cytoplasm. Functionally, required for maturation of 30S ribosomal subunits. This is Ribosome maturation factor RimP from Desulfitobacterium hafniense (strain DSM 10664 / DCB-2).